Reading from the N-terminus, the 340-residue chain is N-acetyl-gamma-glutamyl-phosphate reductase (340 aa).

Residue cysteine 149 is part of the active site.

This sequence belongs to the NAGSA dehydrogenase family. Type 1 subfamily.

Its subcellular location is the cytoplasm. It catalyses the reaction N-acetyl-L-glutamate 5-semialdehyde + phosphate + NADP(+) = N-acetyl-L-glutamyl 5-phosphate + NADPH + H(+). The protein operates within amino-acid biosynthesis; L-arginine biosynthesis; N(2)-acetyl-L-ornithine from L-glutamate: step 3/4. In terms of biological role, catalyzes the NADPH-dependent reduction of N-acetyl-5-glutamyl phosphate to yield N-acetyl-L-glutamate 5-semialdehyde. This chain is N-acetyl-gamma-glutamyl-phosphate reductase, found in Vesicomyosocius okutanii subsp. Calyptogena okutanii (strain HA).